Reading from the N-terminus, the 243-residue chain is Triosephosphate isomerase (243 aa).

Substrate is bound at residue Asn9–Lys11. His96 serves as the catalytic Electrophile. Catalysis depends on Glu165, which acts as the Proton acceptor. Residues Gly171, Ser204, and Gly225–Gly226 contribute to the substrate site.

This sequence belongs to the triosephosphate isomerase family. As to quaternary structure, homodimer.

The protein resides in the cytoplasm. The catalysed reaction is D-glyceraldehyde 3-phosphate = dihydroxyacetone phosphate. It participates in carbohydrate biosynthesis; gluconeogenesis. Its pathway is carbohydrate degradation; glycolysis; D-glyceraldehyde 3-phosphate from glycerone phosphate: step 1/1. Involved in the gluconeogenesis. Catalyzes stereospecifically the conversion of dihydroxyacetone phosphate (DHAP) to D-glyceraldehyde-3-phosphate (G3P). The protein is Triosephosphate isomerase of Synechococcus sp. (strain CC9311).